Here is a 497-residue protein sequence, read N- to C-terminus: Xylooligosaccharide oxidase (497 aa).

The signal sequence occupies residues 1–16; the sequence is MHLLPLTVSATAVVSA. C30 and C79 form a disulfide bridge. 2 N-linked (GlcNAc...) asparagine glycosylation sites follow: N42 and N117. The FAD-binding PCMH-type domain maps to 57 to 230; that stretch reads LPYTPAAIAK…ASFRFKTFAA (174 aa). A cross-link (6-(S-cysteinyl)-8alpha-(pros-histidyl)-FAD (His-Cys)) is located at residues 94-155; that stretch reads HSYASFGLGG…GKRAFSHGTC (62 aa). T154 is a binding site for substrate. N-linked (GlcNAc...) asparagine glycosylation is found at N192, N233, and N245. Substrate is bound at residue R272. N-linked (GlcNAc...) asparagine glycosylation is found at N289 and N307. Residues E412 and Y451 each coordinate substrate.

The protein belongs to the oxygen-dependent FAD-linked oxidoreductase family. FAD serves as cofactor. The FAD cofactor is bound via a bicovalent 6-S-cysteinyl, 8alpha-N1-histidyl FAD linkage.

Its subcellular location is the secreted. The catalysed reaction is D-xylobiose + O2 = D-xylobiono-1,5-lactone + H2O2. The enzyme catalyses D-xylotriose + O2 = D-xylotriono-1,5-lactone + H2O2. It catalyses the reaction D-xylotetraose + O2 = D-xylotetraono-1,5-lactone + H2O2. In terms of biological role, catalyzes the selective oxidation of C1 hydroxyl moieties on mono-, oligo- and polysaccharides with concomitant reduction of molecular oxygen to hydrogen peroxide. This results in the formation of the corresponding lactones, which typically undergo spontaneous hydrolysis. Xylooligosaccharide oxidase is able to oxidize a variety of substrates including D-xylose, D-cellobiose, lactose and arabinose. The enzyme acts primarily on xylooligosaccharides, indicating that it prefers pentose-based oligosaccharides over hexose-based oligosaccharides. The polypeptide is Xylooligosaccharide oxidase (Thermothelomyces thermophilus (strain ATCC 42464 / BCRC 31852 / DSM 1799) (Sporotrichum thermophile)).